We begin with the raw amino-acid sequence, 208 residues long: Small ribosomal subunit protein eS8 (208 aa).

A disordered region spans residues 1–27; it reads MGISRDNWHKRRKTGGKRKPYHKKRKY. Glycine 2 carries N-myristoyl glycine lipidation. Positions 8–26 are enriched in basic residues; the sequence is WHKRRKTGGKRKPYHKKRK. N6-acetyllysine occurs at positions 37 and 128. Threonine 130 carries the phosphothreonine modification. A Phosphoserine modification is found at serine 160. Residues lysine 170 and lysine 193 each participate in a glycyl lysine isopeptide (Lys-Gly) (interchain with G-Cter in SUMO2) cross-link.

This sequence belongs to the eukaryotic ribosomal protein eS8 family. Component of the small ribosomal subunit. Identified in a IGF2BP1-dependent mRNP granule complex containing untranslated mRNAs. Part of the small subunit (SSU) processome, composed of more than 70 proteins and the RNA chaperone small nucleolar RNA (snoRNA) U3.

It localises to the cytoplasm. Its subcellular location is the membrane. The protein localises to the nucleus. It is found in the nucleolus. Component of the small ribosomal subunit. The ribosome is a large ribonucleoprotein complex responsible for the synthesis of proteins in the cell. Part of the small subunit (SSU) processome, first precursor of the small eukaryotic ribosomal subunit. During the assembly of the SSU processome in the nucleolus, many ribosome biogenesis factors, an RNA chaperone and ribosomal proteins associate with the nascent pre-rRNA and work in concert to generate RNA folding, modifications, rearrangements and cleavage as well as targeted degradation of pre-ribosomal RNA by the RNA exosome. The sequence is that of Small ribosomal subunit protein eS8 (RPS8) from Oryctolagus cuniculus (Rabbit).